Consider the following 316-residue polypeptide: HTH-type transcriptional regulator cbl (316 aa).

An HTH lysR-type domain is found at 1 to 59 (MNFQQLKIIREAARQDYNLTEVANMLFTSQSGVSRHIRELEDELGIEIFVRRGKRLLGM). Positions 19-38 (LTEVANMLFTSQSGVSRHIR) form a DNA-binding region, H-T-H motif.

The protein belongs to the LysR transcriptional regulatory family.

In terms of biological role, may be an accessory regulatory protein within the cys regulon. In Escherichia coli (strain K12), this protein is HTH-type transcriptional regulator cbl (cbl).